A 159-amino-acid polypeptide reads, in one-letter code: Putative 4-hydroxy-4-methyl-2-oxoglutarate aldolase (159 aa).

Substrate is bound by residues 78–81 (GDVI) and Arg-100. Asp-101 lines the a divalent metal cation pocket.

Belongs to the class II aldolase/RraA-like family. Homotrimer. A divalent metal cation is required as a cofactor.

It catalyses the reaction 4-hydroxy-4-methyl-2-oxoglutarate = 2 pyruvate. It carries out the reaction oxaloacetate + H(+) = pyruvate + CO2. Catalyzes the aldol cleavage of 4-hydroxy-4-methyl-2-oxoglutarate (HMG) into 2 molecules of pyruvate. Also contains a secondary oxaloacetate (OAA) decarboxylase activity due to the common pyruvate enolate transition state formed following C-C bond cleavage in the retro-aldol and decarboxylation reactions. This chain is Putative 4-hydroxy-4-methyl-2-oxoglutarate aldolase, found in Mycobacterium sp. (strain JLS).